The chain runs to 335 residues: Galactosylgalactosylxylosylprotein 3-beta-glucuronosyltransferase 3 (335 aa).

Residues 1 to 7 (MKLKLKN) lie on the Cytoplasmic side of the membrane. A helical; Signal-anchor for type II membrane protein transmembrane segment spans residues 8 to 28 (VFLAYFLVSIAGLLYALVQLG). Residues 29–335 (QPCDCLPPLR…GQGSDPAIEV (307 aa)) are Lumenal-facing. UDP-alpha-D-glucuronate is bound by residues 82 to 84 (PTY), Asp-113, Arg-156, Arg-161, and 194 to 196 (DDD). Asp-196 contributes to the Mn(2+) binding site. The tract at residues 243 to 252 (WEPNRPFPLD) is interaction with galactose moiety of substrate glycoprotein. Residue Glu-281 is the Proton donor/acceptor of the active site. An N-linked (GlcNAc...) asparagine glycan is attached at Asn-300. Position 308 to 310 (308 to 310 (HTR)) interacts with UDP-alpha-D-glucuronate. A compositionally biased stretch (basic and acidic residues) spans 312–322 (EKPKMKQEEQL). The disordered stretch occupies residues 312 to 335 (EKPKMKQEEQLQRQGQGSDPAIEV).

It belongs to the glycosyltransferase 43 family. In terms of assembly, homodimer; disulfide-linked. Interacts with PXYLP1; the interaction increases the 2-phosphoxylose phosphatase activity of PXYLP1 during completion of linkage region formation in a B3GAT3-mediated manner. The cofactor is Mn(2+). Post-translationally, N-glycosylated. Expressed in heart, aorta, bone, and also in osteoblasts.

The protein resides in the golgi apparatus membrane. The protein localises to the golgi apparatus. It is found in the cis-Golgi network. The enzyme catalyses 3-O-(beta-D-galactosyl-(1-&gt;3)-beta-D-galactosyl-(1-&gt;4)-beta-D-xylosyl)-L-seryl-[protein] + UDP-alpha-D-glucuronate = 3-O-(beta-D-GlcA-(1-&gt;3)-beta-D-Gal-(1-&gt;3)-beta-D-Gal-(1-&gt;4)-beta-D-Xyl)-L-seryl-[protein] + UDP + H(+). Its pathway is protein modification; protein glycosylation. Glycosaminoglycans biosynthesis. Involved in forming the linkage tetrasaccharide present in heparan sulfate and chondroitin sulfate. Transfers a glucuronic acid moiety from the uridine diphosphate-glucuronic acid (UDP-GlcUA) to the common linkage region trisaccharide Gal-beta-1,3-Gal-beta-1,4-Xyl covalently bound to a Ser residue at the glycosaminylglycan attachment site of proteoglycans. Can also play a role in the biosynthesis of l2/HNK-1 carbohydrate epitope on glycoproteins. Stimulates 2-phosphoxylose phosphatase activity of PXYLP1 in presence of uridine diphosphate-glucuronic acid (UDP-GlcUA) during completion of linkage region formation. The polypeptide is Galactosylgalactosylxylosylprotein 3-beta-glucuronosyltransferase 3 (B3gat3) (Mus musculus (Mouse)).